Here is a 309-residue protein sequence, read N- to C-terminus: Acetylglutamate kinase (309 aa).

Substrate is bound by residues 69 to 70, arginine 91, and asparagine 194; that span reads GG.

Belongs to the acetylglutamate kinase family. ArgB subfamily.

The protein localises to the cytoplasm. The enzyme catalyses N-acetyl-L-glutamate + ATP = N-acetyl-L-glutamyl 5-phosphate + ADP. Its pathway is amino-acid biosynthesis; L-arginine biosynthesis; N(2)-acetyl-L-ornithine from L-glutamate: step 2/4. Functionally, catalyzes the ATP-dependent phosphorylation of N-acetyl-L-glutamate. The sequence is that of Acetylglutamate kinase from Vesicomyosocius okutanii subsp. Calyptogena okutanii (strain HA).